The sequence spans 361 residues: Phosphoserine aminotransferase (361 aa).

Arg42 serves as a coordination point for L-glutamate. Pyridoxal 5'-phosphate is bound by residues 76-77 (AR), Trp102, Thr153, Asp173, and Gln196. Lys197 bears the N6-(pyridoxal phosphate)lysine mark. Residue 238–239 (NT) participates in pyridoxal 5'-phosphate binding.

Belongs to the class-V pyridoxal-phosphate-dependent aminotransferase family. SerC subfamily. In terms of assembly, homodimer. The cofactor is pyridoxal 5'-phosphate.

The protein resides in the cytoplasm. The catalysed reaction is O-phospho-L-serine + 2-oxoglutarate = 3-phosphooxypyruvate + L-glutamate. The enzyme catalyses 4-(phosphooxy)-L-threonine + 2-oxoglutarate = (R)-3-hydroxy-2-oxo-4-phosphooxybutanoate + L-glutamate. Its pathway is amino-acid biosynthesis; L-serine biosynthesis; L-serine from 3-phospho-D-glycerate: step 2/3. The protein operates within cofactor biosynthesis; pyridoxine 5'-phosphate biosynthesis; pyridoxine 5'-phosphate from D-erythrose 4-phosphate: step 3/5. Its function is as follows. Catalyzes the reversible conversion of 3-phosphohydroxypyruvate to phosphoserine and of 3-hydroxy-2-oxo-4-phosphonooxybutanoate to phosphohydroxythreonine. This Yersinia pseudotuberculosis serotype IB (strain PB1/+) protein is Phosphoserine aminotransferase.